Here is a 123-residue protein sequence, read N- to C-terminus: Small ribosomal subunit protein uS12 (123 aa).

A 3-methylthioaspartic acid modification is found at aspartate 89.

The protein belongs to the universal ribosomal protein uS12 family. As to quaternary structure, part of the 30S ribosomal subunit. Contacts proteins S8 and S17. May interact with IF1 in the 30S initiation complex.

In terms of biological role, with S4 and S5 plays an important role in translational accuracy. Interacts with and stabilizes bases of the 16S rRNA that are involved in tRNA selection in the A site and with the mRNA backbone. Located at the interface of the 30S and 50S subunits, it traverses the body of the 30S subunit contacting proteins on the other side and probably holding the rRNA structure together. The combined cluster of proteins S8, S12 and S17 appears to hold together the shoulder and platform of the 30S subunit. The protein is Small ribosomal subunit protein uS12 of Orientia tsutsugamushi (strain Boryong) (Rickettsia tsutsugamushi).